Consider the following 254-residue polypeptide: Probable pectate lyase E (254 aa).

The signal sequence occupies residues 1–17; sequence MYQPLLLLPLLLTSAFA. N175 carries an N-linked (GlcNAc...) asparagine glycan. Residues 227–254 form a disordered region; sequence TDNNDKEPKKKGSGPSNACKYKEPLSKC.

It belongs to the polysaccharide lyase 3 family. Ca(2+) serves as cofactor.

It localises to the secreted. The catalysed reaction is Eliminative cleavage of (1-&gt;4)-alpha-D-galacturonan to give oligosaccharides with 4-deoxy-alpha-D-galact-4-enuronosyl groups at their non-reducing ends.. Its function is as follows. Pectinolytic enzyme consist of four classes of enzymes: pectin lyase, polygalacturonase, pectin methylesterase and rhamnogalacturonase. Among pectinolytic enzymes, pectin lyase is the most important in depolymerization of pectin, since it cleaves internal glycosidic bonds of highly methylated pectins. Favors pectate, the anion, over pectin, the methyl ester. The sequence is that of Probable pectate lyase E (plyE) from Neosartorya fischeri (strain ATCC 1020 / DSM 3700 / CBS 544.65 / FGSC A1164 / JCM 1740 / NRRL 181 / WB 181) (Aspergillus fischerianus).